A 128-amino-acid chain; its full sequence is Class I hydrophobin 19 (128 aa).

4 disulfides stabilise this stretch: cysteine 48–cysteine 107, cysteine 55–cysteine 101, cysteine 56–cysteine 88, and cysteine 108–cysteine 121. N-linked (GlcNAc...) asparagine glycosylation occurs at asparagine 110.

This sequence belongs to the fungal hydrophobin family. In terms of assembly, self-assembles to form functional amyloid fibrils called rodlets. Self-assembly into fibrillar rodlets occurs spontaneously at hydrophobic:hydrophilic interfaces and the rodlets further associate laterally to form amphipathic monolayers.

The protein resides in the secreted. It is found in the cell wall. Functionally, aerial growth, conidiation, and dispersal of filamentous fungi in the environment rely upon a capability of their secreting small amphipathic proteins called hydrophobins (HPBs) with low sequence identity. Class I can self-assemble into an outermost layer of rodlet bundles on aerial cell surfaces, conferring cellular hydrophobicity that supports fungal growth, development and dispersal; whereas Class II form highly ordered films at water-air interfaces through intermolecular interactions but contribute nothing to the rodlet structure. The polypeptide is Class I hydrophobin 19 (Pleurotus ostreatus (strain PC15) (Oyster mushroom)).